The chain runs to 787 residues: Pyridoxal-dependent decarboxylase domain-containing protein 1 (787 aa).

Positions 29–41 (EDSQRRTEEENGK) are enriched in basic and acidic residues. Residues 29 to 52 (EDSQRRTEEENGKKLLSGDIPGPL) are disordered. A Phosphoserine modification is found at Ser-653. Positions 683–787 (QGSGVTPPQT…PQVEEPESLR (105 aa)) are disordered. Over residues 685–697 (SGVTPPQTPTGTR) the composition is skewed to polar residues. Thr-688 and Thr-692 each carry phosphothreonine. Phosphoserine occurs at positions 711, 719, and 723. The segment covering 735 to 745 (QSSGGQEASEA) has biased composition (polar residues). Ser-747 and Ser-785 each carry phosphoserine. Basic and acidic residues predominate over residues 774–787 (QDDRPQVEEPESLR).

This sequence belongs to the group II decarboxylase family. It depends on pyridoxal 5'-phosphate as a cofactor.

This is Pyridoxal-dependent decarboxylase domain-containing protein 1 (PDXDC1) from Bos taurus (Bovine).